We begin with the raw amino-acid sequence, 89 residues long: Small ribosomal subunit protein uS15 (89 aa).

The span at 1 to 21 (MAISQERKNEIIKEYARHEGD) shows a compositional bias: basic and acidic residues. Positions 1 to 24 (MAISQERKNEIIKEYARHEGDTGS) are disordered.

The protein belongs to the universal ribosomal protein uS15 family. In terms of assembly, part of the 30S ribosomal subunit. Forms a bridge to the 50S subunit in the 70S ribosome, contacting the 23S rRNA.

One of the primary rRNA binding proteins, it binds directly to 16S rRNA where it helps nucleate assembly of the platform of the 30S subunit by binding and bridging several RNA helices of the 16S rRNA. Functionally, forms an intersubunit bridge (bridge B4) with the 23S rRNA of the 50S subunit in the ribosome. The sequence is that of Small ribosomal subunit protein uS15 from Enterococcus faecalis (strain ATCC 700802 / V583).